Here is a 1092-residue protein sequence, read N- to C-terminus: Myelin regulatory factor (1092 aa).

Residues 1-730 (MDVEDENETL…CVSQRFLQAT (730 aa)) are Cytoplasmic-facing. 3 disordered regions span residues 145 to 168 (SYAA…PQQL), 187 to 210 (PPSR…SIHQ), and 258 to 282 (QQHG…TNTL). Pro residues predominate over residues 196-205 (PPHLQGPLPP). Positions 246–507 (AQQSQMLHQL…SNPGQFESDS (262 aa)) form a DNA-binding region, NDT80. In terms of domain architecture, Peptidase S74 spans 553-662 (SDIRAKESVE…KLTDNLETRI (110 aa)). Residues 646 to 677 (GAVKELCKLTDNLETRIDELERWSHKLAKLRR) adopt a coiled-coil conformation. Over residues 681-695 (MKSTNSHTGSSQFSR) the composition is skewed to polar residues. The segment at 681 to 714 (MKSTNSHTGSSQFSRAGSVPYKQRPPKVMGKTVP) is disordered. Residues 731–751 (IIALVIIMAFSVISMTTLYVL) traverse the membrane as a helical segment. At 752 to 1092 (NLRSEDDMLG…YYFRFYRLCD (341 aa)) the chain is on the lumenal side. 2 disordered regions span residues 798–817 (TTQL…SPDW) and 849–945 (ITRK…DSRY). Composition is skewed to polar residues over residues 849 to 867 (ITRK…TDPA) and 928 to 945 (TPIT…DSRY). Asn941, Asn961, Asn974, and Asn996 each carry an N-linked (GlcNAc...) asparagine glycan.

This sequence belongs to the MRF family. Homotrimer. In terms of processing, follows autocatalytic cleavage via the peptidase S74 domain. Autoprocessing is apparently constitutive and is essential for transcriptional activity.

It is found in the endoplasmic reticulum membrane. It localises to the nucleus. The protein resides in the cytoplasm. Functionally, constitutes a precursor of the transcription factor. Mediates the autocatalytic cleavage that releases the Myelin regulatory factor, N-terminal component that specifically activates transcription of central nervous system (CNS) myelin genes. In terms of biological role, membrane-bound part that has no transcription factor activity and remains attached to the endoplasmic reticulum membrane following cleavage. Transcription factor that specifically activates expression of myelin genes during oligodendrocyte (OL) maturation, thereby playing a central role in oligodendrocyte maturation and CNS myelination. This Xenopus laevis (African clawed frog) protein is Myelin regulatory factor (myrf).